The sequence spans 680 residues: MKFSSLYCFLLLLIFQTDFGQNEETSRRQRRKMYHRRLRKSSLSTHRSVRQPGIQQMKTVTPAAKLPIINLDYSIEENFESFLSVPGVESSYNVLPGKKGHCLANGMIMYNKAVWSPEPCTTCLCLNGKVLCDETKCHPQMCPQTIIPEGECCPVCSNTEQREPTNLPHKQQSPPWEEMNRALRKEELQLEEDEEEVKQDENREQKKKTFRPGDWGRPINEGQSREGKAQRPEEEGRQAHQHRNPARENEEDDDEEEEDDDDEEEDDDDEDETIRGDTFRMPPRLPIPATPRGIPSLPSMCSLSYKTISCISADLTQIPPLTAPEITSLELIDNSITSIPDEAFNGLPNLERLDLSKNNITSSGIGPKAFKFLKNLMRLNMDGNNLVTIPSELPSTLEELKINENKLQVIDEESLSDLNQLVTLELEGNNLSETNVNSLAFKPLKSLSYLRLGRNKFRIIPQGLPASIEELYLENNQIEEITEISFNHTRKINVIGLRYNKIEENRIAPLAWINQENLESIDLSYNKLYHVPSYLPKSLVHLVLIGNQIERIPGYVFGHMEPGLEYLYLSFNKLVDDGIDRVSFYGAYHSLRELFLDHNELKSIPPGVQEMKALHFLRLNNNKIRNILPEQICNAEEDDDSNLQHLHLENNYIKTREIPSYAFSCIRSYSSIVLKPQNIK.

A signal peptide spans 1–20; the sequence is MKFSSLYCFLLLLIFQTDFG. Residues 100-157 form the VWFC domain; the sequence is GHCLANGMIMYNKAVWSPEPCTTCLCLNGKVLCDETKCHPQMCPQTIIPEGECCPVCS. Residues 189-198 show a composition bias toward acidic residues; sequence QLEEDEEEVK. The disordered stretch occupies residues 189-293; sequence QLEEDEEEVK…RLPIPATPRG (105 aa). Basic and acidic residues predominate over residues 223-238; sequence QSREGKAQRPEEEGRQ. Residues 249–272 show a composition bias toward acidic residues; that stretch reads NEEDDDEEEEDDDDEEEDDDDEDE. The Cell attachment site motif lies at 275–277; the sequence is RGD. In terms of domain architecture, LRRNT spans 288–325; it reads PATPRGIPSLPSMCSLSYKTISCISADLTQIPPLTAPE. LRR repeat units follow at residues 349 to 369, 375 to 396, 397 to 417, 420 to 440, 446 to 466, 467 to 488, 491 to 511, 517 to 538, 539 to 559, 563 to 583, 590 to 611, 613 to 634, and 642 to 665; these read NLER…GPKA, NLMR…LPST, LEEL…SLSD, QLVT…NSLA, SLSY…GLPA, SIEE…SFNH, KINV…APLA, NLES…LPKS, LVHL…VFGH, GLEY…DRVS, SLRE…VQEM, ALHF…QICN, and NLQH…AFSC. An N-linked (GlcNAc...) asparagine glycan is attached at asparagine 359. A glycan (N-linked (GlcNAc...) asparagine) is linked at asparagine 430. N-linked (GlcNAc...) asparagine glycosylation occurs at asparagine 487.

Belongs to the small leucine-rich proteoglycan (SLRP) family. SLRP class I subfamily. Interacts with numerous extracellular matrix proteins. Interacts with MSL1 and RASSF1.

The protein localises to the secreted. It is found in the extracellular space. The protein resides in the extracellular matrix. Functionally, promotes matrix assembly and cell adhesiveness. This Bos taurus (Bovine) protein is Extracellular matrix protein 2 (ECM2).